Reading from the N-terminus, the 342-residue chain is MLFWGTPSYAVPTLDALNDSGYEIVGVVSQPDRRRGRGNQQMASPVKQRAMDQGLRVFTPERIRDEGNVQAELKSLKADISVVVAFGQLLPSTVLNQPPLGCWNGHASLLPRWRGAGPIQWSLLSGDSVTGVGIMAMEEGLDTGPVLANQRVSIGLLENANQLSNRLSSITAKLFLESIPRIAAAGPGVESERWKQLEVIKQEEIGGDPTYARMLSKKDHILDWNQSAMDLHRRVMGLYPNAFSSWNNKRLKVQATEPLDEELKSKLSERVRPLLGRWQDGEHEPGKILACESDLGLVVSTKTCPLLIRQGQLEGKSKALGEVLIQQLQATVGQNLGVVCNI.

108–111 (SLLP) contributes to the (6S)-5,6,7,8-tetrahydrofolate binding site.

This sequence belongs to the Fmt family.

It catalyses the reaction L-methionyl-tRNA(fMet) + (6R)-10-formyltetrahydrofolate = N-formyl-L-methionyl-tRNA(fMet) + (6S)-5,6,7,8-tetrahydrofolate + H(+). Functionally, attaches a formyl group to the free amino group of methionyl-tRNA(fMet). The formyl group appears to play a dual role in the initiator identity of N-formylmethionyl-tRNA by promoting its recognition by IF2 and preventing the misappropriation of this tRNA by the elongation apparatus. The chain is Methionyl-tRNA formyltransferase from Prochlorococcus marinus (strain MIT 9303).